Consider the following 149-residue polypeptide: UPF0260 protein Pput_1301 (149 aa).

Belongs to the UPF0260 family.

In Pseudomonas putida (strain ATCC 700007 / DSM 6899 / JCM 31910 / BCRC 17059 / LMG 24140 / F1), this protein is UPF0260 protein Pput_1301.